Consider the following 414-residue polypeptide: Transposon Ty4-J Gag polyprotein (414 aa).

Residues R39–N115 adopt a coiled-coil conformation. Residues G378 to Y414 are disordered. Over residues K393 to E403 the composition is skewed to basic and acidic residues. A compositionally biased stretch (polar residues) spans Q404–Y414.

Its function is as follows. Capsid protein (CA) is the structural component of the virus-like particle (VLP), forming the shell that encapsulates the retrotransposons dimeric RNA genome. This chain is Transposon Ty4-J Gag polyprotein (TY4A-J), found in Saccharomyces cerevisiae (strain ATCC 204508 / S288c) (Baker's yeast).